The primary structure comprises 377 residues: Carboxynorspermidine/carboxyspermidine decarboxylase (377 aa).

Residue Lys41 is modified to N6-(pyridoxal phosphate)lysine. Substrate is bound by residues Glu238 and Asp274.

It belongs to the Orn/Lys/Arg decarboxylase class-II family. NspC subfamily. In terms of assembly, homodimer. It depends on pyridoxal 5'-phosphate as a cofactor.

Its subcellular location is the cytoplasm. The enzyme catalyses carboxynorspermidine + H(+) = norspermidine + CO2. It catalyses the reaction carboxyspermidine + H(+) = spermidine + CO2. Functionally, catalyzes the decarboxylation of carboxynorspermidine and carboxyspermidine. Carboxynorspermidine is decarboxylated 20-fold more efficiently than carboxyspermidine. Exhibits some activity with L-ornithine, but shows no activity with L-arginine, L-lysine or meso-diaminopimelate. The protein is Carboxynorspermidine/carboxyspermidine decarboxylase of Vibrio vulnificus (strain CMCP6).